A 145-amino-acid polypeptide reads, in one-letter code: 3-dehydroquinate dehydratase (145 aa).

Tyr22 (proton acceptor) is an active-site residue. Substrate contacts are provided by Asn74, His80, and Asp87. The active-site Proton donor is the His100. Residues Ile101–Ser102 and Arg111 contribute to the substrate site.

Belongs to the type-II 3-dehydroquinase family. Homododecamer.

The enzyme catalyses 3-dehydroquinate = 3-dehydroshikimate + H2O. The protein operates within metabolic intermediate biosynthesis; chorismate biosynthesis; chorismate from D-erythrose 4-phosphate and phosphoenolpyruvate: step 3/7. Its function is as follows. Catalyzes a trans-dehydration via an enolate intermediate. The chain is 3-dehydroquinate dehydratase from Lachnoclostridium phytofermentans (strain ATCC 700394 / DSM 18823 / ISDg) (Clostridium phytofermentans).